We begin with the raw amino-acid sequence, 281 residues long: CCAAT/enhancer-binding protein epsilon (281 aa).

Residues 1–30 form a disordered region; that stretch reads MSHGTYYECEPRAGQQPLEFSGARAGPGEL. Lys-121 participates in a covalent cross-link: Glycyl lysine isopeptide (Lys-Gly) (interchain with G-Cter in SUMO2). Residue Ser-181 is modified to Phosphoserine. A bZIP domain is found at 204-267; the sequence is SLEYRLRRER…DTLRNLFRQI (64 aa). The basic motif stretch occupies residues 208 to 228; sequence RLRRERNNIAVRKSRDKAKRR. The interval 230 to 237 is leucine-zipper; the sequence is LETQQKVL.

It belongs to the bZIP family. C/EBP subfamily. As to quaternary structure, binds DNA as a homodimer and as a heterodimer. Can form stable heterodimers with CEBPA, CEBPB and CEBPD. Interacts with GATA1 and SPI1. Interacts with SMARCD2. In terms of processing, phosphorylated.

Its subcellular location is the nucleus. Functionally, transcriptional activator. C/EBP are DNA-binding proteins that recognize two different motifs: the CCAAT homology common to many promoters and the enhanced core homology common to many enhancers. Required for the promyelocyte-myelocyte transition in myeloid differentiation. This Ovis aries (Sheep) protein is CCAAT/enhancer-binding protein epsilon (CEBPE).